The sequence spans 840 residues: Putative pentatricopeptide repeat-containing protein At1g31840 (840 aa).

PPR repeat units follow at residues 98–128 (KDPS…MITN), 145–179 (DADV…GVVI), 180–214 (PQDS…GIEP), 216–250 (GVSA…GFRV), 251–284 (GIVS…GPAP), 285–319 (NVVT…GIEP), 320–354 (DLIA…GVKL), 355–389 (DVVV…GISP), 390–424 (NVVT…GMEP), 425–459 (SIVT…GYPP), 460–494 (DVVI…SIRL), 495–529 (NVVV…GIKP), 530–564 (DVAT…GLEP), 565–599 (DALA…KISA), 600–634 (DIAV…KMEP), 635–669 (DIVT…PFGP), 670–704 (NTVT…GSKP), 705–739 (NAVT…GISP), 740–774 (SIVS…KLLP), and 775–809 (DVVA…GVKP).

Belongs to the PPR family. P subfamily.

This Arabidopsis thaliana (Mouse-ear cress) protein is Putative pentatricopeptide repeat-containing protein At1g31840.